Consider the following 444-residue polypeptide: Probable galactarate/D-glucarate transporter GarP (444 aa).

Residues 1 to 11 (MILDTVDEKKK) lie on the Cytoplasmic side of the membrane. The chain crosses the membrane as a helical span at residues 12-32 (GVHTRYLILLIIFIVTAVNYA). Residues 33–56 (DRATLSIAGTEVAKELQLSAVSMG) lie on the Periplasmic side of the membrane. The helical transmembrane segment at 57–77 (YIFSAFGWAYLLMQIPGGWLL) threads the bilayer. Residues 78–89 (DKFGSKKVYTYS) lie on the Cytoplasmic side of the membrane. Transmembrane regions (helical) follow at residues 90-110 (LFFW…PLAW) and 111-131 (AGIS…PSFP). At 132-157 (ANARIVAAWFPTKERGTASAIFNSAQ) the chain is on the cytoplasmic side. The next 2 membrane-spanning stretches (helical) occupy residues 158–178 (YFSL…WGWE) and 179–199 (HVFT…IKLI). Over 200 to 252 (HNPTDHPRMSAEELKFISENGAVVDMDHKKPGSAAASGPKLHYIKQLLSNRMM) the chain is Cytoplasmic. Residues 253-273 (LGVFFGQYFINTITWFFLTWF) traverse the membrane as a helical segment. At 274 to 288 (PIYLVQEKGMSILKV) the chain is on the periplasmic side. The chain crosses the membrane as a helical span at residues 289 to 309 (GLVASIPALCGFAGGVLGGVF). Topologically, residues 310–319 (SDYLIKRGLS) are cytoplasmic. The chain crosses the membrane as a helical span at residues 320–340 (LTLARKLPIVLGMLLASTIIL). Topologically, residues 341-350 (CNYTNNTTLV) are periplasmic. A helical membrane pass occupies residues 351–371 (VMLMALAFFGKGFGALGWPVI). Topologically, residues 372 to 385 (SDTAPKEIVGLCGG) are cytoplasmic. A helical transmembrane segment spans residues 386 to 406 (VFNVFGNVASIVTPLVIGYLV). The Periplasmic portion of the chain corresponds to 407–413 (SELHSFN). The chain crosses the membrane as a helical span at residues 414-434 (AALVFVGCSALMAMVCYLFVV). Residues 435–444 (GDIKRMELQK) lie on the Cytoplasmic side of the membrane.

Belongs to the major facilitator superfamily. Phthalate permease family.

It localises to the cell inner membrane. The catalysed reaction is galactarate(in) + H(+)(in) = galactarate(out) + H(+)(out). It catalyses the reaction D-glucarate(in) + H(+)(in) = D-glucarate(out) + H(+)(out). It carries out the reaction (R)-glycerate(in) + H(+)(in) = (R)-glycerate(out) + H(+)(out). Probably involved in the uptake of galactarate and/or D-glucarate. May also transport D-glycerate. In Escherichia coli (strain K12), this protein is Probable galactarate/D-glucarate transporter GarP.